We begin with the raw amino-acid sequence, 494 residues long: Succinoglycan biosynthesis transport protein ExoT (494 aa).

Transmembrane regions (helical) follow at residues 16–36 (WSVL…PILA), 44–64 (FGAV…GGAG), 82–102 (SVFW…FVFA), 105–125 (LATL…SLLI), 157–177 (LGAV…SLLA), 215–235 (FGMM…MVVI), 253–273 (FASI…FPTF), 297–317 (LLAP…LVLF), 321–341 (WAYA…LTPC), 343–363 (TFIP…WALI), 384–404 (AMIW…WVVF), 421–441 (PMIA…HFGA), and 447–467 (VLQL…LILL).

It belongs to the polysaccharide synthase family.

The protein localises to the cell membrane. It participates in glycan metabolism; exopolysaccharide biosynthesis. The sequence is that of Succinoglycan biosynthesis transport protein ExoT (exoT) from Rhizobium meliloti (strain 1021) (Ensifer meliloti).